Reading from the N-terminus, the 78-residue chain is DNA-directed RNA polymerase subunit omega (78 aa).

This sequence belongs to the RNA polymerase subunit omega family. In cyanobacteria the RNAP catalytic core is composed of 2 alpha, 1 beta, 1 beta', 1 gamma and 1 omega subunit. When a sigma factor is associated with the core the holoenzyme is formed, which can initiate transcription.

It catalyses the reaction RNA(n) + a ribonucleoside 5'-triphosphate = RNA(n+1) + diphosphate. Its function is as follows. Promotes RNA polymerase assembly. Latches the N- and C-terminal regions of the beta' subunit thereby facilitating its interaction with the beta and alpha subunits. In Trichormus variabilis (strain ATCC 29413 / PCC 7937) (Anabaena variabilis), this protein is DNA-directed RNA polymerase subunit omega.